The following is a 217-amino-acid chain: Adr-2-binding protein 1 (217 aa).

The segment at 33–65 (ARPEPQHDSLKRRNTTSSIAKKKAKMTRGDEQI) is disordered. Residues 44-58 (RRNTTSSIAKKKAKM) show a composition bias toward basic residues.

As to quaternary structure, interacts with double-stranded RNA-specific adenosine deaminase adr-2. As to expression, expressed in main body hypodermal cells, the hypodermal seam cells, pharynx, intestine and some neurons.

The protein localises to the nucleus. Functionally, required for the A-I editing activity of the double-stranded RNA-specific adenosine deaminase adr-2 by facilitating adr-2 nuclear localization. This is Adr-2-binding protein 1 from Caenorhabditis elegans.